The sequence spans 91 residues: uncharacterized protein (91 aa).

The disordered stretch occupies residues Glu-71–Val-91.

This is an uncharacterized protein from Archaeoglobus fulgidus (strain ATCC 49558 / DSM 4304 / JCM 9628 / NBRC 100126 / VC-16).